Reading from the N-terminus, the 72-residue chain is Conotoxin 3 (72 aa).

The signal sequence occupies residues 1-22 (MKLTCVVIVAVLLLTACQLITA). A propeptide spanning residues 23 to 46 (DDSRGTQEHRALRSDTKLSMLTLR) is cleaved from the precursor. 3 disulfides stabilise this stretch: C47–C61, C54–C64, and C60–C71.

The protein belongs to the conotoxin O1 superfamily. Expressed by the venom duct.

It is found in the secreted. The sequence is that of Conotoxin 3 from Conus striatus (Striated cone).